A 104-amino-acid polypeptide reads, in one-letter code: Translation initiation factor 1A (104 aa).

Residues 1 to 14 (MRGQQTPPQQPTRV) are compositionally biased toward low complexity. A disordered region spans residues 1-20 (MRGQQTPPQQPTRVRTPREN). The S1-like domain maps to 12–87 (TRVRTPRENE…EKCDVIWRYT (76 aa)).

It belongs to the eIF-1A family.

Seems to be required for maximal rate of protein biosynthesis. Enhances ribosome dissociation into subunits and stabilizes the binding of the initiator Met-tRNA(I) to 40 S ribosomal subunits. The polypeptide is Translation initiation factor 1A (Methanococcus maripaludis (strain DSM 14266 / JCM 13030 / NBRC 101832 / S2 / LL)).